Consider the following 254-residue polypeptide: Small ribosomal subunit protein mS40 (254 aa).

A mitochondrion-targeting transit peptide spans 1–33; it reads MAAPLRHTLLKLVPTLLRSSYVAQVPLQTLCTR. Ser47 is subject to Phosphoserine. Positions 218–254 are disordered; that stretch reads YQGNLLEESGPPPESMPEMPTTPPAESSIEQPGSQSA. Over residues 227-240 the composition is skewed to pro residues; it reads GPPPESMPEMPTTP.

Belongs to the bacterial ribosomal protein bS18 family. Mitochondrion-specific ribosomal protein mS40 subfamily. As to quaternary structure, component of the mitochondrial ribosome small subunit (28S) which comprises a 12S rRNA and about 30 distinct proteins.

It is found in the mitochondrion. In Mus musculus (Mouse), this protein is Small ribosomal subunit protein mS40 (Mrps18b).